An 809-amino-acid polypeptide reads, in one-letter code: Leucine--tRNA ligase (809 aa).

The short motif at 40 to 51 (PYPSGQGLHVGH) is the 'HIGH' region element. The 'KMSKS' region signature appears at 581 to 585 (KMSKS). Residue Lys-584 participates in ATP binding.

The protein belongs to the class-I aminoacyl-tRNA synthetase family.

The protein localises to the cytoplasm. The catalysed reaction is tRNA(Leu) + L-leucine + ATP = L-leucyl-tRNA(Leu) + AMP + diphosphate. The sequence is that of Leucine--tRNA ligase from Levilactobacillus brevis (strain ATCC 367 / BCRC 12310 / CIP 105137 / JCM 1170 / LMG 11437 / NCIMB 947 / NCTC 947) (Lactobacillus brevis).